We begin with the raw amino-acid sequence, 317 residues long: High-affinity zinc uptake system protein ZnuA (317 aa).

The N-terminal stretch at 1–31 is a signal peptide; it reads MNINIMLKNKKKKFFSILAILFILMPNNSYA. Cysteines 259 and 313 form a disulfide.

It belongs to the bacterial solute-binding protein 9 family.

The protein localises to the periplasm. Functionally, part of the ATP-binding cassette (ABC) transport system ZnuABC involved in zinc import. Binds zinc with high affinity and specificity and delivers it to the membrane permease for translocation into the cytoplasm. The protein is High-affinity zinc uptake system protein ZnuA (znuA) of Buchnera aphidicola subsp. Schizaphis graminum (strain Sg).